We begin with the raw amino-acid sequence, 159 residues long: MRYMILGLLALAAVCSAAKKVEFKEPACNVTFKSEANECTTLIKCTTEHEKLIIRHKDKIGKYAVYAIWQPGDTNDYNVTVFQGENRKTFMYKFPFYEMCDITMYMSKQYKLWPPQKCLENTGTFCSTALLITALALVCTLLYLKYKSRRSFIDEKKMP.

The N-terminal stretch at 1–17 is a signal peptide; it reads MRYMILGLLALAAVCSA. Residues 18 to 123 are Lumenal-facing; the sequence is AKKVEFKEPA…PPQKCLENTG (106 aa). 2 disulfide bridges follow: cysteine 28-cysteine 45 and cysteine 39-cysteine 100. Residues asparagine 29 and asparagine 78 are each glycosylated (N-linked (GlcNAc...) asparagine; by host). Residues 124-144 form a helical membrane-spanning segment; that stretch reads TFCSTALLITALALVCTLLYL. The Cytoplasmic portion of the chain corresponds to 145–159; sequence KYKSRRSFIDEKKMP. A Di-lysine motif motif is present at residues 156 to 159; it reads KKMP.

It belongs to the adenoviridae E19 family. Both disulfide bonds are absolutely critical for the interaction with MHC antigens. In terms of processing, N-glycosylated; high-mannose.

It localises to the host endoplasmic reticulum membrane. In terms of biological role, binds and retains class I heavy chains in the endoplasmic reticulum during the early period of virus infection, thereby impairing their transport to the cell surface. Also delays the expression of class I alleles that it cannot affect by direct retention. Binds transporters associated with antigen processing (TAP) and acts as a tapasin inhibitor, preventing class I/TAP association. In consequence, infected cells are masked for immune recognition by cytotoxic T-lymphocytes. This Homo sapiens (Human) protein is Early E3 18.5 kDa glycoprotein.